We begin with the raw amino-acid sequence, 547 residues long: Chaperonin GroEL 2 (547 aa).

ATP is bound by residues 30-33 (TLGP), Lys-51, 87-91 (DGTTT), Gly-415, 479-481 (NAA), and Asp-495. The tract at residues 525–547 (PKEESAAPAGGGMGGMGGMGGMM) is disordered. Residues 533-547 (AGGGMGGMGGMGGMM) show a composition bias toward gly residues.

Belongs to the chaperonin (HSP60) family. In terms of assembly, forms a cylinder of 14 subunits composed of two heptameric rings stacked back-to-back. Interacts with the co-chaperonin GroES.

The protein localises to the cytoplasm. It catalyses the reaction ATP + H2O + a folded polypeptide = ADP + phosphate + an unfolded polypeptide.. Together with its co-chaperonin GroES, plays an essential role in assisting protein folding. The GroEL-GroES system forms a nano-cage that allows encapsulation of the non-native substrate proteins and provides a physical environment optimized to promote and accelerate protein folding. This Anaeromyxobacter dehalogenans (strain 2CP-C) protein is Chaperonin GroEL 2.